Reading from the N-terminus, the 863-residue chain is Receptor-like protein Cf-9 (863 aa).

The N-terminal stretch at 1-21 is a signal peptide; the sequence is MDCVKLVFLMLYTFLCQLALS. Topologically, residues 22–812 are extracellular; sequence SSLPHLCPED…EEDSPMISWQ (791 aa). Positions 24–91 are N-cap; that stretch reads LPHLCPEDQA…GVHCDETTGQ (68 aa). N-linked (GlcNAc...) asparagine glycosylation is found at Asn48, Asn72, Asn109, Asn127, Asn142, Asn191, Asn204, and Asn212. The stretch at 92 to 115 is one LRR 1; degenerate repeat; sequence VIALDLRCSQLQGKFHSNSSLFQL. 2 LRR repeats span residues 116–139 and 141–164; these read SNLK…KFGE and SNLT…ICHL. One copy of the LRR 4; degenerate repeat lies at 165 to 191; the sequence is SKLHVLRICDQYGLSLVPYNFELLLKN. LRR repeat units lie at residues 192–214, 215–238, 241–263, 265–287, 288–312, 314–335, 336–358, 359–382, 383–406, 408–428, 429–452, 454–476, 477–500, 502–524, 525–549, 551–572, 573–597, 599–623, 667–690, 691–714, 715–739, and 741–759; these read LTQL…SNFS, SHLT…VFHL, LQSL…KWNS, ASLM…SFSH, LTSL…LWNL, NIVF…FTIF, EKLK…LSFN, TQLE…ISGL, QNLE…IFSL, SLVE…EFKS, KTLS…LLNQ, NLQL…ICNL, KTLI…VVER, EYLS…TFSV, GNIL…MINC, YLTL…WLGY, LFQL…GNTN, FMGL…ILGN, LDSN…IIGD, LVGL…SFQN, LSVL…LASL, and FLEV…IPKG. N-linked (GlcNAc...) asparagine glycosylation occurs at Asn262. Asn300 and Asn311 each carry an N-linked (GlcNAc...) asparagine glycan. 3 N-linked (GlcNAc...) asparagine glycosylation sites follow: Asn378, Asn396, and Asn416. Residue Asn464 is glycosylated (N-linked (GlcNAc...) asparagine). N-linked (GlcNAc...) asparagine glycosylation is present at Asn519. Asn563 is a glycosylation site (N-linked (GlcNAc...) asparagine). Asn698 and Asn714 each carry an N-linked (GlcNAc...) asparagine glycan. N-linked (GlcNAc...) asparagine glycosylation is found at Asn746 and Asn767. Residues 760–812 form a C-cap/acidic domain region; sequence KQFDSFGNTSYQGNDGLRGFPLSKLCGGEDQVTTPAELDQEEEEEDSPMISWQ. Residues 813 to 833 traverse the membrane as a helical segment; that stretch reads GVLVGYGCGLVIGLSVIYIMW. Residues 834–863 lie on the Cytoplasmic side of the membrane; it reads STQYPAWFSRMDLKLEHIITTKMKKHKKRY.

Belongs to the RLP family. Interacts with thioredoxin-like protein CITRX.

It localises to the cell membrane. Involved in plant defense. Confers resistance to the fungal pathogen C.fulvum through recognition of the AVR9 elicitor protein. The chain is Receptor-like protein Cf-9 from Solanum pimpinellifolium (Currant tomato).